Consider the following 28-residue polypeptide: Flagellar filament 34 kDa core protein (28 aa).

Belongs to the bacterial flagellin family. As to quaternary structure, the flagellum consists of an outer layer composed of repeating units of FlaA around a core that contains several antigenically related polypeptides.

The protein localises to the periplasmic flagellum. It is found in the periplasm. Functionally, component of the core of the flagella. The sequence is that of Flagellar filament 34 kDa core protein from Treponema phagedenis.